The primary structure comprises 384 residues: MELQEVLHMNGGEGDTSYAKNSSYNLFLIRVKPVLEQCIQELLRANLPNINKCFKVGDLGCASGPNTFSTVRDIVQSIDKVGQEKKNELERPTIQIFLNDLFQNDFNSVFKLLPSFYRNLEKENGRKIGSCLIGAMPGSFYSRLFPEESMHFLHSCYCLHWLSQVPSGLVTELGISANKGCIYSSKASGPPIKKAYLDQFTKDFTTFLRIHSEELISRGRMLLTFICKEDEFDHPNSMDLLEMSINDLVIEGHLEEEKLDSFNVPIYAPSTEEVKRIVEEEGSFEILYLETFYAPYDAGFSIDDDYQGRSHSPVSCDEHARAAHVASVVRSIYEPILASHFGEAILPDLSHRIAKNAAKVLRSGKGFYDSVIISLAKKPEKADM.

8 residues coordinate S-adenosyl-L-homocysteine: Tyr18, Cys61, Asn66, Asp100, Leu101, Ser139, Phe140, and Cys156. Tyr157 is a binding site for theobromine. Position 158 (Cys158) interacts with S-adenosyl-L-homocysteine. Theobromine contacts are provided by His160 and Trp161. A Mg(2+)-binding site is contributed by Asn178. Ser237 contributes to the theobromine binding site. The Mg(2+) site is built by Asp260, Phe262, and Asn263. Tyr368 contributes to the theobromine binding site.

This sequence belongs to the methyltransferase superfamily. Type-7 methyltransferase family. The cofactor is Mg(2+). Highly expressed in developing endosperm. Detected in young leaves and flower buds. Present in immature fruits (grains), but barely in mature fruits.

It catalyses the reaction 7-methylxanthine + S-adenosyl-L-methionine = theobromine + S-adenosyl-L-homocysteine + H(+). The enzyme catalyses theobromine + S-adenosyl-L-methionine = caffeine + S-adenosyl-L-homocysteine + H(+). The catalysed reaction is 1,7-dimethylxanthine + S-adenosyl-L-methionine = caffeine + S-adenosyl-L-homocysteine + H(+). It participates in alkaloid biosynthesis. Involved in the biosynthesis of caffeine. Catalyzes the conversion of 7-methylxanthine (7mX) to theobromine and of theobromine to caffeine. Has 1-N-methylation activity. The sequence is that of 3,7-dimethylxanthine N-methyltransferase 2 from Coffea arabica (Arabian coffee).